Consider the following 116-residue polypeptide: Large ribosomal subunit protein bL17 (116 aa).

Belongs to the bacterial ribosomal protein bL17 family. Part of the 50S ribosomal subunit. Contacts protein L32.

The polypeptide is Large ribosomal subunit protein bL17 (Picosynechococcus sp. (strain ATCC 27264 / PCC 7002 / PR-6) (Agmenellum quadruplicatum)).